The primary structure comprises 728 residues: 1,4-alpha-glucan branching enzyme GlgB (728 aa).

The active-site Nucleophile is Asp-405. Glu-458 serves as the catalytic Proton donor.

Belongs to the glycosyl hydrolase 13 family. GlgB subfamily. In terms of assembly, monomer.

The catalysed reaction is Transfers a segment of a (1-&gt;4)-alpha-D-glucan chain to a primary hydroxy group in a similar glucan chain.. It functions in the pathway glycan biosynthesis; glycogen biosynthesis. Catalyzes the formation of the alpha-1,6-glucosidic linkages in glycogen by scission of a 1,4-alpha-linked oligosaccharide from growing alpha-1,4-glucan chains and the subsequent attachment of the oligosaccharide to the alpha-1,6 position. The polypeptide is 1,4-alpha-glucan branching enzyme GlgB (Escherichia coli O1:K1 / APEC).